Here is a 124-residue protein sequence, read N- to C-terminus: Small ribosomal subunit protein uS12 (124 aa).

D89 carries the 3-methylthioaspartic acid modification.

This sequence belongs to the universal ribosomal protein uS12 family. As to quaternary structure, part of the 30S ribosomal subunit. Contacts proteins S8 and S17. May interact with IF1 in the 30S initiation complex.

Its function is as follows. With S4 and S5 plays an important role in translational accuracy. Interacts with and stabilizes bases of the 16S rRNA that are involved in tRNA selection in the A site and with the mRNA backbone. Located at the interface of the 30S and 50S subunits, it traverses the body of the 30S subunit contacting proteins on the other side and probably holding the rRNA structure together. The combined cluster of proteins S8, S12 and S17 appears to hold together the shoulder and platform of the 30S subunit. This is Small ribosomal subunit protein uS12 from Acinetobacter baylyi (strain ATCC 33305 / BD413 / ADP1).